A 255-amino-acid polypeptide reads, in one-letter code: Octanoyltransferase (255 aa).

Positions 1-21 (MCATPVSPSPESPRSAQAGAA) are disordered. Residues 56–242 (FETSDEIWLV…SLIANIDGIP (187 aa)) form the BPL/LPL catalytic domain. Substrate-binding positions include 96 to 103 (RGGQITYH), 173 to 175 (ALG), and 186 to 188 (GVS). Cys204 functions as the Acyl-thioester intermediate in the catalytic mechanism.

This sequence belongs to the LipB family.

It localises to the cytoplasm. It carries out the reaction octanoyl-[ACP] + L-lysyl-[protein] = N(6)-octanoyl-L-lysyl-[protein] + holo-[ACP] + H(+). It functions in the pathway protein modification; protein lipoylation via endogenous pathway; protein N(6)-(lipoyl)lysine from octanoyl-[acyl-carrier-protein]: step 1/2. In terms of biological role, catalyzes the transfer of endogenously produced octanoic acid from octanoyl-acyl-carrier-protein onto the lipoyl domains of lipoate-dependent enzymes. Lipoyl-ACP can also act as a substrate although octanoyl-ACP is likely to be the physiological substrate. The polypeptide is Octanoyltransferase (Paraburkholderia phymatum (strain DSM 17167 / CIP 108236 / LMG 21445 / STM815) (Burkholderia phymatum)).